We begin with the raw amino-acid sequence, 492 residues long: Pre-mRNA-processing factor 19 (492 aa).

Residues 1–72 enclose the U-box domain; it reads MSFVCGISGE…APRNVSGTSI (72 aa). WD repeat units follow at residues 207-246, 249-288, 291-330, 336-375, 378-417, and 461-491; these read HSTGTPGITALDIKGNLSLTGGIDKTVVLYDYEKEQVMQT, GHNKKINAVVLHPDNITAISASADSHIRVWSATDSSSKAI, VHQAPVTDISLNASGDYILSASDDSYWAFSDIRSGKSLCK, GSQIAVHSIEFHPDGLIFGTGAADAVVKIWDLKNQTVAAA, GHTAAVRSIAFSENGYYLATGSEDGEVKLWDLRKLKNLKT, and DHSGPVTGVRFGENARSLVTCSLDKSLRVFS.

It belongs to the WD repeat PRP19 family. In terms of assembly, homotetramer. Component of the NTC complex (or PRP19-associated complex) which is associated with the spliceosome.

It localises to the nucleus. The protein resides in the nucleoplasm. The catalysed reaction is S-ubiquitinyl-[E2 ubiquitin-conjugating enzyme]-L-cysteine + [acceptor protein]-L-lysine = [E2 ubiquitin-conjugating enzyme]-L-cysteine + N(6)-ubiquitinyl-[acceptor protein]-L-lysine.. The protein operates within protein modification; protein ubiquitination. Its function is as follows. Probable ubiquitin-protein ligase which is mainly involved pre-mRNA splicing and DNA repair. Core component of the NTC/Nineteen complex which is part of the spliceosome and participates in its assembly, its remodeling and is required for its activity. Together with emb-4, necessary for interaction of rnp-4, a probable exon junction complex component, with mRNAs and spliceosomal snRNAs. Plays a role in nuclear retention of unspliced mRNAs. The polypeptide is Pre-mRNA-processing factor 19 (prp-19) (Caenorhabditis elegans).